The chain runs to 386 residues: Alkanesulfonate monooxygenase (386 aa).

Belongs to the SsuD family.

The catalysed reaction is an alkanesulfonate + FMNH2 + O2 = an aldehyde + FMN + sulfite + H2O + 2 H(+). Catalyzes the desulfonation of aliphatic sulfonates. In Paraburkholderia phytofirmans (strain DSM 17436 / LMG 22146 / PsJN) (Burkholderia phytofirmans), this protein is Alkanesulfonate monooxygenase.